The chain runs to 376 residues: Spermidine/putrescine import ATP-binding protein PotA (376 aa).

The 231-residue stretch at 6–236 (INIVNVNKSF…PADTFVADFL (231 aa)) folds into the ABC transporter domain. An ATP-binding site is contributed by 38–45 (GPSGCGKT).

The protein belongs to the ABC transporter superfamily. Spermidine/putrescine importer (TC 3.A.1.11.1) family. The complex is composed of two ATP-binding proteins (PotA), two transmembrane proteins (PotB and PotC) and a solute-binding protein (PotD).

It localises to the cell inner membrane. The enzyme catalyses ATP + H2O + polyamine-[polyamine-binding protein]Side 1 = ADP + phosphate + polyamineSide 2 + [polyamine-binding protein]Side 1.. Its function is as follows. Part of the ABC transporter complex PotABCD involved in spermidine/putrescine import. Responsible for energy coupling to the transport system. In Fusobacterium nucleatum subsp. nucleatum (strain ATCC 25586 / DSM 15643 / BCRC 10681 / CIP 101130 / JCM 8532 / KCTC 2640 / LMG 13131 / VPI 4355), this protein is Spermidine/putrescine import ATP-binding protein PotA.